The following is a 517-amino-acid chain: Bifunctional purine biosynthesis protein PurH (517 aa).

Residues M1 to V145 form the MGS-like domain.

Belongs to the PurH family.

It catalyses the reaction (6R)-10-formyltetrahydrofolate + 5-amino-1-(5-phospho-beta-D-ribosyl)imidazole-4-carboxamide = 5-formamido-1-(5-phospho-D-ribosyl)imidazole-4-carboxamide + (6S)-5,6,7,8-tetrahydrofolate. It carries out the reaction IMP + H2O = 5-formamido-1-(5-phospho-D-ribosyl)imidazole-4-carboxamide. Its pathway is purine metabolism; IMP biosynthesis via de novo pathway; 5-formamido-1-(5-phospho-D-ribosyl)imidazole-4-carboxamide from 5-amino-1-(5-phospho-D-ribosyl)imidazole-4-carboxamide (10-formyl THF route): step 1/1. It participates in purine metabolism; IMP biosynthesis via de novo pathway; IMP from 5-formamido-1-(5-phospho-D-ribosyl)imidazole-4-carboxamide: step 1/1. The protein is Bifunctional purine biosynthesis protein PurH of Prochlorococcus marinus subsp. pastoris (strain CCMP1986 / NIES-2087 / MED4).